The chain runs to 429 residues: Phosphoribosylamine--glycine ligase (429 aa).

Residues 109 to 316 (KDFLARHQIP…LVDLCLAAID (208 aa)) enclose the ATP-grasp domain. 135 to 196 (VREQGAPIVV…EEFLDGEEAS (62 aa)) contributes to the ATP binding site. The tract at residues 212–235 (SQDHKRVGDKDTGPNTGGMGAYSP) is disordered. Positions 213–223 (QDHKRVGDKDT) are enriched in basic and acidic residues. 2 residues coordinate Mg(2+): E286 and N288.

This sequence belongs to the GARS family. It depends on Mg(2+) as a cofactor. Requires Mn(2+) as cofactor.

It carries out the reaction 5-phospho-beta-D-ribosylamine + glycine + ATP = N(1)-(5-phospho-beta-D-ribosyl)glycinamide + ADP + phosphate + H(+). Its pathway is purine metabolism; IMP biosynthesis via de novo pathway; N(1)-(5-phospho-D-ribosyl)glycinamide from 5-phospho-alpha-D-ribose 1-diphosphate: step 2/2. This Vibrio parahaemolyticus serotype O3:K6 (strain RIMD 2210633) protein is Phosphoribosylamine--glycine ligase.